The primary structure comprises 124 residues: Glycine cleavage system H protein (124 aa).

In terms of domain architecture, Lipoyl-binding spans 22-104; sequence LVITGITDHA…YGKGWIYKIK (83 aa). At Lys63 the chain carries N6-lipoyllysine.

The protein belongs to the GcvH family. The glycine cleavage system is composed of four proteins: P, T, L and H. (R)-lipoate is required as a cofactor.

In terms of biological role, the glycine cleavage system catalyzes the degradation of glycine. The H protein shuttles the methylamine group of glycine from the P protein to the T protein. This is Glycine cleavage system H protein from Acinetobacter baumannii (strain SDF).